A 486-amino-acid polypeptide reads, in one-letter code: Arginine deiminase (486 aa).

Cys476 functions as the Amidino-cysteine intermediate in the catalytic mechanism.

Belongs to the arginine deiminase family.

The protein localises to the cytoplasm. It catalyses the reaction L-arginine + H2O = L-citrulline + NH4(+). Its pathway is amino-acid degradation; L-arginine degradation via ADI pathway; carbamoyl phosphate from L-arginine: step 1/2. Functionally, involved in the arginine deiminase pathway of fermentative arginine utilization. The chain is Arginine deiminase (arcA) from Halobacterium salinarum (strain ATCC 29341 / DSM 671 / R1).